Consider the following 304-residue polypeptide: tRNA dimethylallyltransferase (304 aa).

An ATP-binding site is contributed by 2–9; sequence GPTASGKT. 4–9 contributes to the substrate binding site; the sequence is TASGKT. Interaction with substrate tRNA stretches follow at residues 27–30, 151–155, 232–237, and 265–272; these read DSAL, QRINR, RCVGYR, and KRQITWLR.

It belongs to the IPP transferase family. In terms of assembly, monomer. Requires Mg(2+) as cofactor.

It carries out the reaction adenosine(37) in tRNA + dimethylallyl diphosphate = N(6)-dimethylallyladenosine(37) in tRNA + diphosphate. Catalyzes the transfer of a dimethylallyl group onto the adenine at position 37 in tRNAs that read codons beginning with uridine, leading to the formation of N6-(dimethylallyl)adenosine (i(6)A). The protein is tRNA dimethylallyltransferase of Actinobacillus pleuropneumoniae serotype 5b (strain L20).